The following is a 1066-amino-acid chain: Coiled-coil domain-containing protein 73 (1066 aa).

Coiled-coil stretches lie at residues Lys47–Gln134 and Leu178–Glu391. 5 disordered regions span residues Leu568–Phe600, Ser719–Gly811, Leu854–Thr883, Lys944–Asn978, and Val1003–Asn1027. 5 stretches are compositionally biased toward polar residues: residues Asn591 to Phe600, Arg742 to Ala781, Pro789 to Gly811, Ala857 to Arg869, and Ser948 to Ser964. The span at Leu967–Asn978 shows a compositional bias: basic and acidic residues. The span at Val1003–Val1013 shows a compositional bias: polar residues.

This is Coiled-coil domain-containing protein 73 (Ccdc73) from Mus musculus (Mouse).